Consider the following 153-residue polypeptide: Small ribosomal subunit protein uS17 (153 aa).

The protein belongs to the universal ribosomal protein uS17 family.

This chain is Small ribosomal subunit protein uS17 (RpS11), found in Anopheles gambiae (African malaria mosquito).